We begin with the raw amino-acid sequence, 529 residues long: Basal body-orientation factor 1 (529 aa).

The span at 1-13 (MPSKGKDKKKGKS) shows a compositional bias: basic residues. The interval 1 to 22 (MPSKGKDKKKGKSKGKDTKKLI) is disordered. Coiled-coil stretches lie at residues 85–201 (LKKQ…EAEK) and 271–361 (VKEK…EVER).

It belongs to the BBOF1 family. In terms of assembly, interacts with MNS1 and ODF2.

It localises to the cytoplasm. The protein localises to the cytoskeleton. It is found in the cilium basal body. The protein resides in the flagellum axoneme. Plays an essential role in sperm motility and male fertility by stabilizing the sperm flagellar axonemal structure. May be required for the stability of ODF2 and MANS1 proteins. Dispensable for the assembly and function of motile cilia. The sequence is that of Basal body-orientation factor 1 from Homo sapiens (Human).